The following is a 172-amino-acid chain: Putative phosphoesterase BC_1225 (172 aa).

H34 functions as the Proton donor in the catalytic mechanism. Short sequence motifs (HXTX) lie at residues H34–L37 and H115–I118. H115 serves as the catalytic Proton acceptor.

Belongs to the 2H phosphoesterase superfamily. YjcG family.

This is Putative phosphoesterase BC_1225 from Bacillus cereus (strain ATCC 14579 / DSM 31 / CCUG 7414 / JCM 2152 / NBRC 15305 / NCIMB 9373 / NCTC 2599 / NRRL B-3711).